The following is a 60-amino-acid chain: MPRLKVKLVKSPIGYPKDQKAALKALGLRRLQQERVLEDTPAIRGNVEKVAHLVRVEVVE.

The protein belongs to the universal ribosomal protein uL30 family. In terms of assembly, part of the 50S ribosomal subunit.

This Thermus thermophilus (strain ATCC BAA-163 / DSM 7039 / HB27) protein is Large ribosomal subunit protein uL30.